An 883-amino-acid chain; its full sequence is Valine--tRNA ligase (883 aa).

The 'HIGH' region motif lies at 46–56 (PNVTGKLHLGH). Positions 520–524 (KMSKS) match the 'KMSKS' region motif. Lysine 523 contributes to the ATP binding site. The stretch at 809 to 844 (LADLLNVEEELARLEKELAKWQKELDMVGKKLSNER) forms a coiled coil.

This sequence belongs to the class-I aminoacyl-tRNA synthetase family. ValS type 1 subfamily. As to quaternary structure, monomer.

The protein resides in the cytoplasm. The enzyme catalyses tRNA(Val) + L-valine + ATP = L-valyl-tRNA(Val) + AMP + diphosphate. Catalyzes the attachment of valine to tRNA(Val). As ValRS can inadvertently accommodate and process structurally similar amino acids such as threonine, to avoid such errors, it has a 'posttransfer' editing activity that hydrolyzes mischarged Thr-tRNA(Val) in a tRNA-dependent manner. This is Valine--tRNA ligase from Streptococcus thermophilus (strain CNRZ 1066).